The following is a 392-amino-acid chain: F-box protein At5g65850 (392 aa).

The region spanning 29-78 is the F-box domain; it reads TEKSVQIPVDIIIEILLRLPAKSIATCRCVSKLWISVICRQDFTELFLTR.

In Arabidopsis thaliana (Mouse-ear cress), this protein is F-box protein At5g65850.